The following is a 426-amino-acid chain: Histidine--tRNA ligase (426 aa).

This sequence belongs to the class-II aminoacyl-tRNA synthetase family. In terms of assembly, homodimer.

The protein localises to the cytoplasm. It carries out the reaction tRNA(His) + L-histidine + ATP = L-histidyl-tRNA(His) + AMP + diphosphate + H(+). The chain is Histidine--tRNA ligase from Streptococcus sanguinis (strain SK36).